Consider the following 311-residue polypeptide: Malate dehydrogenase (311 aa).

NAD(+)-binding positions include 7–13 (GAAGGIG) and aspartate 34. The substrate site is built by arginine 81 and arginine 87. Residues asparagine 94 and 117-119 (ITN) contribute to the NAD(+) site. The substrate site is built by asparagine 119 and arginine 153. Histidine 177 functions as the Proton acceptor in the catalytic mechanism. Methionine 227 serves as a coordination point for NAD(+).

The protein belongs to the LDH/MDH superfamily. MDH type 1 family. Homodimer.

It catalyses the reaction (S)-malate + NAD(+) = oxaloacetate + NADH + H(+). In terms of biological role, catalyzes the reversible oxidation of malate to oxaloacetate. The chain is Malate dehydrogenase from Shewanella woodyi (strain ATCC 51908 / MS32).